Reading from the N-terminus, the 185-residue chain is Ribosome-recycling factor (185 aa).

It belongs to the RRF family.

The protein resides in the cytoplasm. Responsible for the release of ribosomes from messenger RNA at the termination of protein biosynthesis. May increase the efficiency of translation by recycling ribosomes from one round of translation to another. The chain is Ribosome-recycling factor from Bacillus mycoides (strain KBAB4) (Bacillus weihenstephanensis).